The sequence spans 125 residues: MRIAGVNLPLNKHAVIALTHVYGIGKTSARNILERAGIDPAKKIAEMSDEEAHAIREIIAEEYKVEGQARGLQQLAVKRLMDIGCYRGLRHRRSLPVRGQRTQTNARTRKGKRKTVAGKKKAVKK.

The tract at residues 94–125 is disordered; that stretch reads SLPVRGQRTQTNARTRKGKRKTVAGKKKAVKK. Residues 107–125 are compositionally biased toward basic residues; the sequence is RTRKGKRKTVAGKKKAVKK.

This sequence belongs to the universal ribosomal protein uS13 family. Part of the 30S ribosomal subunit. Forms a loose heterodimer with protein S19. Forms two bridges to the 50S subunit in the 70S ribosome.

Functionally, located at the top of the head of the 30S subunit, it contacts several helices of the 16S rRNA. In the 70S ribosome it contacts the 23S rRNA (bridge B1a) and protein L5 of the 50S subunit (bridge B1b), connecting the 2 subunits; these bridges are implicated in subunit movement. Contacts the tRNAs in the A and P-sites. The chain is Small ribosomal subunit protein uS13 from Prosthecochloris aestuarii (strain DSM 271 / SK 413).